Here is a 766-residue protein sequence, read N- to C-terminus: Leucine-rich repeat and fibronectin type III domain-containing protein 1 (766 aa).

The signal sequence occupies residues 1–31 (MAPGPFSSGLLSPPPAALPFLLLLWAGASRG). Positions 32–65 (QPCPGRCICQNVAPTLTMLCAKTGLLFVPPAIDR) constitute an LRRNT domain. Topologically, residues 32-536 (QPCPGRCICQ…LRAHFLGGTM (505 aa)) are extracellular. LRR repeat units lie at residues 66–87 (RVVE…DFAN), 90–111 (SLVH…AFAD), 114–135 (ALRA…QLRG), 138–159 (NLRH…AFDA), 163–184 (TVED…AVGQ), 187–208 (NLNT…TFVQ), and 211–232 (KLVR…GLFL). The N-linked (GlcNAc...) asparagine glycan is linked to asparagine 87. The 47-residue stretch at 252–298 (NPLHCNCELLWLRRLTREDDLETCATPEHLTDRYFWSIPEEEFLCEP) folds into the LRRCT domain. In terms of domain architecture, Ig-like spans 299 to 386 (PLITRQAGGR…GEATAPVEVC (88 aa)). Cysteine 321 and cysteine 370 are oxidised to a cystine. Asparagine 343 is a glycosylation site (N-linked (GlcNAc...) asparagine). The interval 397-422 (PAAPPPLTEPGSSDIATPGRPGANDS) is disordered. Positions 424 to 520 (TERRLVAAEL…GCVQFTTAGD (97 aa)) constitute a Fibronectin type-III domain. The helical transmembrane segment at 537 to 557 (IIAIGGVIVASVLVFIVLLMI) threads the bilayer. Over 558–766 (RYKVYGDGDS…STEWMLESTV (209 aa)) the chain is Cytoplasmic. 2 disordered regions span residues 568–601 (RRIK…PPAP) and 646–742 (CLLP…GEDG). Serine 713 carries the post-translational modification Phosphoserine. Over residues 714-727 (YPRRARRTKRHRST) the composition is skewed to basic residues.

This sequence belongs to the LRFN family. As to quaternary structure, forms heteromeric complexes with LRFN2, LRFN4 and LRFN5; binding to LRFN2 and LRFN5 may be weaker than that to LRFN4. Also interacts with LRFN3. Forms homomeric complexes, but not across cell junctions. Interacts with DLG1, DLG2 and DLG4, but not with MAGI2, not CASK. Interacts with DLG3. Interacts with 2 AMPA receptor subunits GRIA1 and GRIA2 and NMDA receptor subunit GRIN1. Glycosylated. In terms of tissue distribution, mainly expressed in brain (at protein level) and testis. In brain, found in cerebral cortex (including pyramidal neurons), hippocampus (including CA3 and CA1 neurons), dentate gyrus, cerebellum (including Purkinje neurons) (at protein level) (at protein level). Also expressed in the olfactory bulb.

It is found in the membrane. The protein resides in the synapse. Its subcellular location is the postsynaptic density membrane. Its function is as follows. Promotes neurite outgrowth in hippocampal neurons. Involved in the regulation of the differentiation and maintenance of excitatory synapses. Induces the clustering of excitatory postsynaptic proteins, including DLG4, DLGAP1, GRIA1 and GRIN1. This chain is Leucine-rich repeat and fibronectin type III domain-containing protein 1 (Lrfn1), found in Rattus norvegicus (Rat).